Here is a 518-residue protein sequence, read N- to C-terminus: ATP synthase subunit alpha (518 aa).

ATP is bound at residue 170–177 (GDRQTGKT).

It belongs to the ATPase alpha/beta chains family. In terms of assembly, F-type ATPases have 2 components, CF(1) - the catalytic core - and CF(0) - the membrane proton channel. CF(1) has five subunits: alpha(3), beta(3), gamma(1), delta(1), epsilon(1). CF(0) has three main subunits: a(1), b(2) and c(9-12). The alpha and beta chains form an alternating ring which encloses part of the gamma chain. CF(1) is attached to CF(0) by a central stalk formed by the gamma and epsilon chains, while a peripheral stalk is formed by the delta and b chains.

The protein localises to the cell membrane. The catalysed reaction is ATP + H2O + 4 H(+)(in) = ADP + phosphate + 5 H(+)(out). Its function is as follows. Produces ATP from ADP in the presence of a proton gradient across the membrane. The alpha chain is a regulatory subunit. The protein is ATP synthase subunit alpha of Mycoplasmoides gallisepticum (strain R(low / passage 15 / clone 2)) (Mycoplasma gallisepticum).